The following is a 217-amino-acid chain: Large ribosomal subunit protein uL1 (217 aa).

This sequence belongs to the universal ribosomal protein uL1 family. Part of the 50S ribosomal subunit.

Binds directly to 23S rRNA. The L1 stalk is quite mobile in the ribosome, and is involved in E site tRNA release. Functionally, protein L1 is also a translational repressor protein, it controls the translation of the L11 operon by binding to its mRNA. This is Large ribosomal subunit protein uL1 from Wolbachia pipientis wMel.